Here is a 155-residue protein sequence, read N- to C-terminus: Small ribosomal subunit protein uS7 (155 aa).

This sequence belongs to the universal ribosomal protein uS7 family. Part of the 30S ribosomal subunit. Contacts proteins S9 and S11.

Its function is as follows. One of the primary rRNA binding proteins, it binds directly to 16S rRNA where it nucleates assembly of the head domain of the 30S subunit. Is located at the subunit interface close to the decoding center, probably blocks exit of the E-site tRNA. This Thermotoga maritima (strain ATCC 43589 / DSM 3109 / JCM 10099 / NBRC 100826 / MSB8) protein is Small ribosomal subunit protein uS7.